The chain runs to 527 residues: Tyrosine-protein kinase TXK (527 aa).

The segment at 58-81 (TQSNRGGVQPSKRKPLPPLPQEPP) is disordered. The 61-residue stretch at 82 to 142 (DERIQVKALY…PSNYVTENRL (61 aa)) folds into the SH3 domain. The residue at position 91 (Tyr-91) is a Phosphotyrosine; by autocatalysis. Positions 150–246 (WYHKNITRNQ…GLISRLRYPI (97 aa)) constitute an SH2 domain. A Protein kinase domain is found at 271–527 (LAFVKEIGSG…QVLTEIAETW (257 aa)). ATP contacts are provided by residues 277–285 (IGSGQFGVV) and Lys-299. The active-site Proton acceptor is the Asp-390. Tyr-420 bears the Phosphotyrosine; by FYN and autocatalysis mark.

The protein belongs to the protein kinase superfamily. Tyr protein kinase family. TEC subfamily. As to quaternary structure, interacts with PARP1 and EEF1A1. Interacts with SH2D2A. Interacts with FYN. Post-translationally, phosphorylated at Tyr-420 by FYN. Autophosphorylation at Tyr-91 is critical for the activation of TXK, leading to the up-regulation of IFN-gamma gene transcription. In terms of processing, the cysteine string at the N-terminus is palmitoylated and required for the proper subcellular location. As to expression, expressed in early thymocytes, T-cells and mast cells.

It is found in the cytoplasm. The protein resides in the nucleus. Its subcellular location is the cell membrane. It carries out the reaction L-tyrosyl-[protein] + ATP = O-phospho-L-tyrosyl-[protein] + ADP + H(+). With respect to regulation, activated by phosphorylation by FYN. In terms of biological role, non-receptor tyrosine kinase that plays a redundant role with ITK in regulation of the adaptive immune response. Regulates the development, function and differentiation of conventional T-cells and nonconventional NKT-cells. When antigen presenting cells (APC) activate T-cell receptor (TCR), a series of phosphorylation leads to the recruitment of TXK to the cell membrane, where it is phosphorylated at Tyr-420. Phosphorylation leads to TXK full activation. Also contributes to signaling from many receptors and participates in multiple downstream pathways, including regulation of the actin cytoskeleton. Like ITK, can phosphorylate PLCG1, leading to its localization in lipid rafts and activation, followed by subsequent cleavage of its substrates. In turn, the endoplasmic reticulum releases calcium in the cytoplasm and the nuclear activator of activated T-cells (NFAT) translocates into the nucleus to perform its transcriptional duty. Plays a role in the positive regulation of IFNG transcription in T-helper 1 cells as part of an IFNG promoter-binding complex with PARP1 and EEF1A1. Within the complex, phosphorylates both PARP1 and EEF1A1. Also phosphorylates key sites in LCP2 leading to the up-regulation of Th1 preferred cytokine IL-2. Phosphorylates 'Tyr-201' of CTLA4 which leads to the association of PI-3 kinase with the CTLA4 receptor. This is Tyrosine-protein kinase TXK (Txk) from Mus musculus (Mouse).